The primary structure comprises 178 residues: NAD(P)H-quinone oxidoreductase subunit 6, chloroplastic (178 aa).

Transmembrane regions (helical) follow at residues Phe-10–Thr-30, Pro-32–Leu-52, Ala-61–Met-81, Leu-94–Ile-114, and Phe-154–Ala-174.

Belongs to the complex I subunit 6 family. As to quaternary structure, NDH is composed of at least 16 different subunits, 5 of which are encoded in the nucleus.

Its subcellular location is the plastid. It localises to the chloroplast thylakoid membrane. The catalysed reaction is a plastoquinone + NADH + (n+1) H(+)(in) = a plastoquinol + NAD(+) + n H(+)(out). It catalyses the reaction a plastoquinone + NADPH + (n+1) H(+)(in) = a plastoquinol + NADP(+) + n H(+)(out). Functionally, NDH shuttles electrons from NAD(P)H:plastoquinone, via FMN and iron-sulfur (Fe-S) centers, to quinones in the photosynthetic chain and possibly in a chloroplast respiratory chain. The immediate electron acceptor for the enzyme in this species is believed to be plastoquinone. Couples the redox reaction to proton translocation, and thus conserves the redox energy in a proton gradient. The chain is NAD(P)H-quinone oxidoreductase subunit 6, chloroplastic (ndhG) from Citrus sinensis (Sweet orange).